The following is a 98-amino-acid chain: Defensin-like protein 68 (98 aa).

A signal peptide spans 1-19; that stretch reads MGSSKLLVALTLVVMITIS. 4 disulfide bridges follow: C38–C88, C42–C65, C51–C86, and C55–C87.

The protein belongs to the DEFL family.

It localises to the secreted. This is Defensin-like protein 68 from Arabidopsis thaliana (Mouse-ear cress).